A 396-amino-acid chain; its full sequence is Elongation factor Tu (396 aa).

The region spanning 10–206 (KPHVNVGTIG…ALDSYIPDPE (197 aa)) is the tr-type G domain. Residues 19–26 (GHVDHGKT) are G1. A GTP-binding site is contributed by 19–26 (GHVDHGKT). Thr-26 serves as a coordination point for Mg(2+). The segment at 60 to 64 (GITIN) is G2. Positions 81–84 (DCPG) are G3. GTP contacts are provided by residues 81-85 (DCPGH) and 136-139 (NKCD). Residues 136-139 (NKCD) form a G4 region. The interval 174–176 (SAL) is G5.

The protein belongs to the TRAFAC class translation factor GTPase superfamily. Classic translation factor GTPase family. EF-Tu/EF-1A subfamily. Monomer.

The protein resides in the cytoplasm. The catalysed reaction is GTP + H2O = GDP + phosphate + H(+). In terms of biological role, GTP hydrolase that promotes the GTP-dependent binding of aminoacyl-tRNA to the A-site of ribosomes during protein biosynthesis. The chain is Elongation factor Tu from Dechloromonas aromatica (strain RCB).